The primary structure comprises 491 residues: Ligand-gated ion channel 50 (491 aa).

The N-terminal stretch at 1–19 (MRFLLVLQLVFFYFSAATT) is a signal peptide. Asn-55 and Asn-101 each carry an N-linked (GlcNAc...) asparagine glycan. Cysteines 157 and 171 form a disulfide. 3 consecutive transmembrane segments (helical) span residues 241–261 (LFQS…GFFF), 265–287 (SVSA…FGNV), and 302–322 (VWMI…AIVC). An N-linked (GlcNAc...) asparagine glycan is attached at Asn-418. Residues 465–485 (MIMFPLSFLIFNVVYWSIYFM) traverse the membrane as a helical segment.

The protein belongs to the ligand-gated ion channel (TC 1.A.9) family.

It is found in the postsynaptic cell membrane. Its subcellular location is the cell membrane. This Caenorhabditis elegans protein is Ligand-gated ion channel 50 (lgc-50).